The primary structure comprises 78 residues: Defensin-like protein 173 (78 aa).

An N-terminal signal peptide occupies residues 1-23 (MAKAPSPLVFPIIFLIIFALVEP). Cystine bridges form between Cys-27–Cys-71, Cys-34–Cys-56, Cys-40–Cys-65, and Cys-44–Cys-67.

This sequence belongs to the DEFL family.

The protein localises to the secreted. In Arabidopsis thaliana (Mouse-ear cress), this protein is Defensin-like protein 173 (LCR63).